Reading from the N-terminus, the 453-residue chain is UDP-glucosyltransferase avaP (453 aa).

This sequence belongs to the UDP-glycosyltransferase family.

It functions in the pathway secondary metabolite biosynthesis. Functionally, UDP-glucosyltransferase; part of the cluster that mediates the biosynthesis of a highly modified cyclo-arginine-tryptophan dipeptide (cRW). The first step of the pathway is perfornmed by the arginine-containing cyclodipeptide synthase (RCPDS) avaA that acts as the scaffold-generating enzyme and is responsible for formation of the cyclo-Arg-Trp (cRW) diketopiperazine. AvaB then acts as a multifunctional flavoenzyme that is responsible for generating the cyclo-Arg-formylkynurenine DKP, which can be deformylated by avaC. AvaB then further catalyzes an additional N-oxidation followed by cyclization and dehydration. The next step is an N-acetylation of the guanidine group catalyzed by the arginine N-acetyltransferase avaD. The roles of the additional enzymes identified within the ava cluster still have to be determined. The sequence is that of UDP-glucosyltransferase avaP from Aspergillus versicolor.